Here is a 667-residue protein sequence, read N- to C-terminus: Mannosyl-oligosaccharide alpha-1,2-mannosidase IA (667 aa).

Residues 1-18 (MYRISPIGRKSNFHSREK) are Cytoplasmic-facing. Residues 19–39 (CLIGLVLVTLCFLCFGGIFLL) form a helical; Signal-anchor for type II membrane protein membrane-spanning segment. Topologically, residues 40-667 (PDNFGSDRVL…PVTLPVSNAS (628 aa)) are lumenal. A disordered region spans residues 154–192 (GDNAASQASSHPQSSAQQHNQQQPQLPLGGGGNDQAPDT). Residues 156 to 178 (NAASQASSHPQSSAQQHNQQQPQ) show a composition bias toward low complexity. The N-linked (GlcNAc...) asparagine glycan is linked to asparagine 278. Cysteine 483 and cysteine 515 are oxidised to a cystine. Glutamate 529 functions as the Proton donor in the catalytic mechanism. Residue threonine 640 participates in Ca(2+) binding.

Belongs to the glycosyl hydrolase 47 family. The cofactor is Ca(2+). Mg(2+) serves as cofactor. In terms of tissue distribution, complex spatial distribution during embryogenesis, including expression in lobula plate giant neurons. Also expressed in adult wing and eyes.

The protein localises to the golgi apparatus membrane. It catalyses the reaction N(4)-(alpha-D-Man-(1-&gt;2)-alpha-D-Man-(1-&gt;2)-alpha-D-Man-(1-&gt;3)-[alpha-D-Man-(1-&gt;2)-alpha-D-Man-(1-&gt;3)-[alpha-D-Man-(1-&gt;2)-alpha-D-Man-(1-&gt;6)]-alpha-D-Man-(1-&gt;6)]-beta-D-Man-(1-&gt;4)-beta-D-GlcNAc-(1-&gt;4)-beta-D-GlcNAc)-L-asparaginyl-[protein] (N-glucan mannose isomer 9A1,2,3B1,2,3) + 4 H2O = N(4)-(alpha-D-Man-(1-&gt;3)-[alpha-D-Man-(1-&gt;3)-[alpha-D-Man-(1-&gt;6)]-alpha-D-Man-(1-&gt;6)]-beta-D-Man-(1-&gt;4)-beta-D-GlcNAc-(1-&gt;4)-beta-D-GlcNAc)-L-asparaginyl-[protein] (N-glucan mannose isomer 5A1,2) + 4 beta-D-mannose. The enzyme catalyses N(4)-(alpha-D-Man-(1-&gt;2)-alpha-D-Man-(1-&gt;2)-alpha-D-Man-(1-&gt;3)-[alpha-D-Man-(1-&gt;3)-[alpha-D-Man-(1-&gt;2)-alpha-D-Man-(1-&gt;6)]-alpha-D-Man-(1-&gt;6)]-beta-D-Man-(1-&gt;4)-beta-D-GlcNAc-(1-&gt;4)-beta-D-GlcNAc)-L-asparaginyl-[protein] (N-glucan mannose isomer 8A1,2,3B1,3) + 3 H2O = N(4)-(alpha-D-Man-(1-&gt;3)-[alpha-D-Man-(1-&gt;3)-[alpha-D-Man-(1-&gt;6)]-alpha-D-Man-(1-&gt;6)]-beta-D-Man-(1-&gt;4)-beta-D-GlcNAc-(1-&gt;4)-beta-D-GlcNAc)-L-asparaginyl-[protein] (N-glucan mannose isomer 5A1,2) + 3 beta-D-mannose. The protein operates within protein modification; protein glycosylation. Involved in the maturation of Asn-linked oligosaccharides. Progressively trim alpha-1,2-linked mannose residues from Man(9)GlcNAc(2) to produce Man(5)GlcNAc(2). The chain is Mannosyl-oligosaccharide alpha-1,2-mannosidase IA from Drosophila melanogaster (Fruit fly).